A 354-amino-acid polypeptide reads, in one-letter code: S-adenosylmethionine:tRNA ribosyltransferase-isomerase (354 aa).

Belongs to the QueA family. As to quaternary structure, monomer.

Its subcellular location is the cytoplasm. The catalysed reaction is 7-aminomethyl-7-carbaguanosine(34) in tRNA + S-adenosyl-L-methionine = epoxyqueuosine(34) in tRNA + adenine + L-methionine + 2 H(+). It participates in tRNA modification; tRNA-queuosine biosynthesis. In terms of biological role, transfers and isomerizes the ribose moiety from AdoMet to the 7-aminomethyl group of 7-deazaguanine (preQ1-tRNA) to give epoxyqueuosine (oQ-tRNA). The polypeptide is S-adenosylmethionine:tRNA ribosyltransferase-isomerase (Thermosynechococcus vestitus (strain NIES-2133 / IAM M-273 / BP-1)).